Reading from the N-terminus, the 105-residue chain is Wound-induced protein 1 (105 aa).

To potato anionic peroxidase. As to expression, ubiquitous.

The protein is Wound-induced protein 1 (WUN1) of Solanum tuberosum (Potato).